Here is an 85-residue protein sequence, read N- to C-terminus: U4-theraphotoxin-Hhn1a (85 aa).

A signal peptide spans 1–22 (MKVTLIVILTCAAVLVLHTTAA). The propeptide occupies 23-48 (EELEAESQLMEVGMPDTELAAVDEER). Disulfide bonds link C52/C66, C56/C77, and C71/C82.

This sequence belongs to the neurotoxin 12 (Hwtx-2) family. 02 (Hwtx-2) subfamily. In terms of assembly, monomer. In terms of tissue distribution, expressed by the venom gland.

It is found in the secreted. Functionally, neurotoxin active on both insects and mammals. The protein is U4-theraphotoxin-Hhn1a of Cyriopagopus hainanus (Chinese bird spider).